The following is a 109-amino-acid chain: Period circadian protein (109 aa).

Residues 59-109 are disordered; sequence CFEGSGGSGSSGNFTSGSNLNMRSVTNTSNTGTGTSSESVPLVTLTEALIS. Residues 69–98 show a composition bias toward low complexity; that stretch reads SGNFTSGSNLNMRSVTNTSNTGTGTSSESV.

As to quaternary structure, forms a heterodimer with timeless (TIM); the complex then translocates into the nucleus. In terms of processing, phosphorylated with a circadian rhythmicity, probably by the double-time protein (dbt). Phosphorylation could be implicated in the stability of per monomer and in the formation of heterodimer per-tim.

The protein resides in the nucleus. It localises to the cytoplasm. It is found in the perinuclear region. In terms of biological role, essential for biological clock functions. Determines the period length of circadian and ultradian rhythms; an increase in PER dosage leads to shortened circadian rhythms and a decrease leads to lengthened circadian rhythms. Essential for the circadian rhythmicity of locomotor activity, eclosion behavior, and for the rhythmic component of the male courtship song that originates in the thoracic nervous system. The biological cycle depends on the rhythmic formation and nuclear localization of the TIM-PER complex. Light induces the degradation of TIM, which promotes elimination of PER. Nuclear activity of the heterodimer coordinatively regulates PER and TIM transcription through a negative feedback loop. Behaves as a negative element in circadian transcriptional loop. Does not appear to bind DNA, suggesting indirect transcriptional inhibition. This chain is Period circadian protein (per), found in Syritta pipiens (Hoverfly).